The sequence spans 270 residues: Protein-ADP-ribose hydrolase (270 aa).

The Macro domain maps to 73–267 (VSVKDCQKTN…LYDTYLQKEN (195 aa)). Residues aspartate 92, isoleucine 93, and asparagine 106 each coordinate ADP-D-ribose. Zn(2+)-binding residues include cysteine 112, histidine 117, and cysteine 119. ADP-D-ribose-binding residues include cysteine 119, isoleucine 120, aspartate 121, serine 212, threonine 213, glycine 214, glutamate 215, and phenylalanine 216.

This sequence belongs to the MacroD-type family. Zn-Macro subfamily. Zn(2+) is required as a cofactor.

It carries out the reaction 4-O-(ADP-D-ribosyl)-L-aspartyl-[protein] + H2O = L-aspartyl-[protein] + ADP-D-ribose + H(+). In terms of biological role, ADP-ribosylhydrolase that specifically reverses the SirTM-mediated mono-ADP-ribosylation at an asparatate residue of GcvH-L, by releasing ADP-ribose from the target protein. May play a role in the regulation of the response to host-induced oxidative stress. This is Protein-ADP-ribose hydrolase from Streptococcus pyogenes serotype M1.